Reading from the N-terminus, the 381-residue chain is Ribosome assembly 1 protein (381 aa).

Met-1 carries the N-acetylmethionine modification. 3 disordered regions span residues 1 to 38 (MNYNNFENSKGDGHSRLPKPTYSGTLSDGYDESKIKRQ), 164 to 216 (KDTF…DRDE), and 350 to 381 (FGSSEDNNKNHYKPNYKNRKPNLSRANFTRNK). A Phosphoserine modification is found at Ser-172. Positions 359-371 (NHYKPNYKNRKPN) are enriched in basic residues.

It is found in the nucleus. Its function is as follows. Involved in a late nucleoplasmic step of 60S ribosomal subunit assembly. The protein is Ribosome assembly 1 protein (RSA1) of Saccharomyces cerevisiae (strain ATCC 204508 / S288c) (Baker's yeast).